Here is a 312-residue protein sequence, read N- to C-terminus: Mevalonate kinase (312 aa).

104-114 (PISCGLGSSAS) contacts ATP. Asp-155 acts as the Proton acceptor in catalysis.

It belongs to the GHMP kinase family. Mevalonate kinase subfamily. In terms of assembly, homodimer. Mg(2+) serves as cofactor.

It is found in the cytoplasm. The enzyme catalyses (R)-mevalonate + ATP = (R)-5-phosphomevalonate + ADP + H(+). The protein operates within isoprenoid biosynthesis; isopentenyl diphosphate biosynthesis via mevalonate pathway; isopentenyl diphosphate from (R)-mevalonate: step 1/3. Its activity is regulated as follows. Farnesyl- and geranyl-pyrophosphates are competitive inhibitors. Slightly inhibited by high concentration of ATP. In terms of biological role, catalyzes the phosphorylation of (R)-mevalonate (MVA) to (R)-mevalonate 5-phosphate (MVAP). Functions in the mevalonate (MVA) pathway leading to isopentenyl diphosphate (IPP), a key precursor for the biosynthesis of isoprenoid compounds such as archaeal membrane lipids. The polypeptide is Mevalonate kinase (Methanocaldococcus jannaschii (strain ATCC 43067 / DSM 2661 / JAL-1 / JCM 10045 / NBRC 100440) (Methanococcus jannaschii)).